An 81-amino-acid chain; its full sequence is Delta-conotoxin PVIA (81 aa).

An N-terminal signal peptide occupies residues 1–22 (MKLTCVMIVAVLFLTAWTFVTA). Residues 23–49 (DDSKNGLENHFWKARDEMKNREASKLD) constitute a propeptide that is removed on maturation. Disulfide bonds link cysteine 54–cysteine 69, cysteine 61–cysteine 73, and cysteine 68–cysteine 78. 4-hydroxyproline occurs at positions 57 and 65. Glycine 80 carries the post-translational modification Glycine amide; in form delta-conotoxin PVIA.

The difference between delta-conotoxin PVIA and [deamido]-delta-conotoxin PVIA lies in the state of amidation of Gly-80. In terms of tissue distribution, expressed by the venom duct.

Its subcellular location is the secreted. Delta-conotoxins bind to site 6 of voltage-gated sodium channels (Nav) and inhibit the inactivation process. This toxin shows weak effects on rNav1.2/SCN2A (EC(50)=2.9 uM), rNav1.4/SCN4A (EC(50)=5.2 uM), hNav1.7/SCN9A (EC(50)=1.9 uM) and rNav1.7/SCN9A (EC(50)=6.4 uM). In vivo, this toxin shows different effects. In mice, injection of this toxin causes hyperactivity, rapid running, limb extension, and death. In fish, the peptide elicites spurts of rapid swimming, with twisted motions, quivering fins and the lockjaw extended mouth syndrome. Rigid paralysis and death are observed at higher doses. In mollusks, this peptide is inactive. Injection of this peptide together with the kappa-conotoxin PVIIA causes the sudden tetanus of prey (STOP) syndrome, which is a single, lethal 'fin-pop' in envenomed fish. This chain is Delta-conotoxin PVIA, found in Conus purpurascens (Purple cone).